Reading from the N-terminus, the 563-residue chain is uncharacterized protein (563 aa).

Residues 19–45 (CLICRRRKVKCDRQQPCSRCKERNEVC) constitute a DNA-binding region (zn(2)-C6 fungal-type). The tract at residues 56–78 (NVGPHPSHSENASDSETTLEVSP) is disordered. Positions 64 to 75 (SENASDSETTLE) are enriched in polar residues.

Its subcellular location is the nucleus. This is an uncharacterized protein from Schizosaccharomyces pombe (strain 972 / ATCC 24843) (Fission yeast).